The primary structure comprises 399 residues: uncharacterized protein (399 aa).

10 consecutive transmembrane segments (helical) span residues 7–27 (FSAL…LYLI), 33–53 (FLQI…FEVP), 79–99 (AFFP…IWAL), 131–151 (LLIT…SLNI), 153–173 (FPFL…SVFI), 208–228 (VLLI…ISRY), 242–262 (SLGY…TLTI), 296–316 (PLGI…HPIV), 335–355 (LNSG…GIIS), and 357–377 (AFGL…PIIL).

It belongs to the major facilitator superfamily. Drug:H(+) antiporter-3 (DHA3) (TC 2.A.1.21) family.

It is found in the cell membrane. This is an uncharacterized protein from Bacillus subtilis (strain 168).